The following is a 202-amino-acid chain: Ribosome maturation factor RimP (202 aa).

Belongs to the RimP family.

The protein localises to the cytoplasm. Required for maturation of 30S ribosomal subunits. The chain is Ribosome maturation factor RimP from Polaromonas naphthalenivorans (strain CJ2).